Reading from the N-terminus, the 252-residue chain is Thiamine thiazole synthase (252 aa).

Residues Ser-35, 54 to 55, Gly-62, Val-126, and 152 to 154 each bind NAD(+); these read EK and HVD. Asp-154 and His-169 together coordinate Fe cation. Met-217 serves as a coordination point for NAD(+). Arg-227 lines the glycine pocket.

Belongs to the THI4 family. As to quaternary structure, homooctamer; tetramer of dimers. The cofactor is Fe(2+).

The enzyme catalyses hydrogen sulfide + glycine + NAD(+) = ADP-5-ethyl-4-methylthiazole-2-carboxylate + nicotinamide + 3 H2O + H(+). The protein operates within cofactor biosynthesis; thiamine diphosphate biosynthesis. Involved in the biosynthesis of the thiazole moiety of thiamine. Catalyzes the conversion of NAD and glycine to adenosine diphosphate 5-(2-hydroxyethyl)-4-methylthiazole-2-carboxylate (ADT), an adenylated thiazole intermediate, using free sulfide as a source of sulfur. The protein is Thiamine thiazole synthase of Pyrococcus horikoshii (strain ATCC 700860 / DSM 12428 / JCM 9974 / NBRC 100139 / OT-3).